Reading from the N-terminus, the 416-residue chain is MSKADIIVGIQWGDEGKGKVVDKLCENYDFVCRSAGGHNAGHTIWVNGVRYALHLMPSGVLHPRCINIIGNGVVVSPEVLIAEMAQFENLKGRLYISDRAHLNLKHHSLIDIAKEKLKGKNAIGTTGKGIGPSYADKINRTGHRVGELLEPQRLCEALMKDFEANKTFFEMLEIEIPSAEELLADLKRFNEILTPYITDTTRMLWKALDEDKRVLLEGAQGSMLDIDHGTYPYVTSSSTISAGALTGLGLNPKEAGNIIGIVKAYATRVGNGAFPTEDKGEDGEKIAQIGKEIGVSTGRKRRCGWFDAVAVRYTARLNGLDALSLMKLDVLDGFEKIKICRAYEYKGMEIDYIPSDLENVQPIYEEMDGWDKVFGIKDYDLLPENAKKYIARLEELAGVKVKYISTSPERDDTIIL.

GTP-binding positions include 13–19 (GDEGKGK) and 41–43 (GHT). Asp14 functions as the Proton acceptor in the catalytic mechanism. 2 residues coordinate Mg(2+): Asp14 and Gly41. IMP contacts are provided by residues 14–17 (DEGK), 39–42 (NAGH), Thr126, Arg140, Gln220, Thr235, and Arg299. His42 functions as the Proton donor in the catalytic mechanism. 295–301 (VSTGRKR) serves as a coordination point for substrate. GTP is bound by residues Arg301, 327-329 (KLD), and 405-407 (STS).

This sequence belongs to the adenylosuccinate synthetase family. Homodimer. It depends on Mg(2+) as a cofactor.

It is found in the cytoplasm. The enzyme catalyses IMP + L-aspartate + GTP = N(6)-(1,2-dicarboxyethyl)-AMP + GDP + phosphate + 2 H(+). The protein operates within purine metabolism; AMP biosynthesis via de novo pathway; AMP from IMP: step 1/2. Functionally, plays an important role in the de novo pathway of purine nucleotide biosynthesis. Catalyzes the first committed step in the biosynthesis of AMP from IMP. The protein is Adenylosuccinate synthetase of Campylobacter jejuni subsp. jejuni serotype O:6 (strain 81116 / NCTC 11828).